The primary structure comprises 509 residues: Putative thymidine phosphorylase (509 aa).

Belongs to the thymidine/pyrimidine-nucleoside phosphorylase family. Type 2 subfamily.

The enzyme catalyses thymidine + phosphate = 2-deoxy-alpha-D-ribose 1-phosphate + thymine. This chain is Putative thymidine phosphorylase, found in Bradyrhizobium sp. (strain ORS 278).